Here is a 449-residue protein sequence, read N- to C-terminus: Trigger factor (449 aa).

The PPIase FKBP-type domain occupies 169–254 (GDRITVDFVG…AKQVEAPGEL (86 aa)).

It belongs to the FKBP-type PPIase family. Tig subfamily.

The protein localises to the cytoplasm. It catalyses the reaction [protein]-peptidylproline (omega=180) = [protein]-peptidylproline (omega=0). Functionally, involved in protein export. Acts as a chaperone by maintaining the newly synthesized protein in an open conformation. Functions as a peptidyl-prolyl cis-trans isomerase. This is Trigger factor from Azorhizobium caulinodans (strain ATCC 43989 / DSM 5975 / JCM 20966 / LMG 6465 / NBRC 14845 / NCIMB 13405 / ORS 571).